The sequence spans 299 residues: Bifunctional protein FolD (299 aa).

Residues 168 to 170 (GRS), S193, and I234 contribute to the NADP(+) site.

It belongs to the tetrahydrofolate dehydrogenase/cyclohydrolase family. Homodimer.

It catalyses the reaction (6R)-5,10-methylene-5,6,7,8-tetrahydrofolate + NADP(+) = (6R)-5,10-methenyltetrahydrofolate + NADPH. The enzyme catalyses (6R)-5,10-methenyltetrahydrofolate + H2O = (6R)-10-formyltetrahydrofolate + H(+). It participates in one-carbon metabolism; tetrahydrofolate interconversion. Catalyzes the oxidation of 5,10-methylenetetrahydrofolate to 5,10-methenyltetrahydrofolate and then the hydrolysis of 5,10-methenyltetrahydrofolate to 10-formyltetrahydrofolate. The polypeptide is Bifunctional protein FolD (Bartonella henselae (strain ATCC 49882 / DSM 28221 / CCUG 30454 / Houston 1) (Rochalimaea henselae)).